The following is a 406-amino-acid chain: Kelch domain-containing protein 2 (406 aa).

Kelch repeat units lie at residues 31 to 85 (ERSG…NTEG), 92 to 136 (SGSC…ERID), 148 to 207 (LGVW…TWSQ), 221 to 259 (HACATVGNRGFVFGGRYRDARMNDLHYLNLDTWEWNELI), 271 to 311 (HSLT…IQFN), and 322 to 359 (HTACASDEGEVIVFGGCANNLLVHHRAAHSNEILIFSV).

As to quaternary structure, component of a CRL2(KLHDC2) E3 ubiquitin-protein ligase complex, also named ECS(KLHDC2) complex, composed of CUL2, Elongin BC (ELOB and ELOC), RBX1 and substrate-specific adapter KLHDC2. May form oligomers as a KLHDC2-ELOB-ELOC complex; this interaction is autoinhibitory for the E3 ligase complex as the substrate-binding site of KLHDC2 is blocked in the oligomer. Interacts with CREB3; interaction is direct and specific as it does not interact with CREB1, ATF4, ATF6, JUN, FOS, CEBPA or herpes simplex virus transactivator VP16. In terms of processing, autoubiquitinated by the CRL2(KLHDC2) E3 ligase complex. As to expression, widely expressed, with high levels in skeletal muscle, heart, pancreas and liver. Undetectable in peripheral blood leukocytes.

The protein resides in the nucleus. The protein operates within protein modification; protein ubiquitination. In terms of biological role, substrate-recognition component of a Cul2-RING (CRL2) E3 ubiquitin-protein ligase complex of the DesCEND (destruction via C-end degrons) pathway, which recognizes a C-degron located at the extreme C terminus of target proteins, leading to their ubiquitination and degradation. The C-degron recognized by the DesCEND pathway is usually a motif of less than ten residues and can be present in full-length proteins, truncated proteins or proteolytically cleaved forms. The CRL2(KLHDC2) complex specifically recognizes proteins with a diglycine (Gly-Gly) at the C-terminus, leading to their ubiquitination and degradation. The CRL2(KLHDC2) complex mediates ubiquitination and degradation of truncated SELENOK and SELENOS selenoproteins produced by failed UGA/Sec decoding, which end with a diglycine. The CRL2(KLHDC2) complex also recognizes proteolytically cleaved proteins ending with Gly-Gly, such as the N-terminal fragment of USP1, leading to their degradation. May also act as an indirect repressor of CREB3-mediated transcription by interfering with CREB3-DNA-binding. This is Kelch domain-containing protein 2 from Homo sapiens (Human).